The chain runs to 309 residues: 4-hydroxy-3-methylbut-2-enyl diphosphate reductase (309 aa).

C12 is a binding site for [4Fe-4S] cluster. Positions 43 and 77 each coordinate (2E)-4-hydroxy-3-methylbut-2-enyl diphosphate. Dimethylallyl diphosphate contacts are provided by H43 and H77. Residues H43 and H77 each contribute to the isopentenyl diphosphate site. Residue C99 participates in [4Fe-4S] cluster binding. Position 127 (H127) interacts with (2E)-4-hydroxy-3-methylbut-2-enyl diphosphate. H127 is a binding site for dimethylallyl diphosphate. Residue H127 coordinates isopentenyl diphosphate. Catalysis depends on E129, which acts as the Proton donor. A (2E)-4-hydroxy-3-methylbut-2-enyl diphosphate-binding site is contributed by T167. Residue C197 participates in [4Fe-4S] cluster binding. Residues S225, S226, N227, and S269 each contribute to the (2E)-4-hydroxy-3-methylbut-2-enyl diphosphate site. Residues S225, S226, N227, and S269 each coordinate dimethylallyl diphosphate. Residues S225, S226, N227, and S269 each coordinate isopentenyl diphosphate.

This sequence belongs to the IspH family. The cofactor is [4Fe-4S] cluster.

The enzyme catalyses isopentenyl diphosphate + 2 oxidized [2Fe-2S]-[ferredoxin] + H2O = (2E)-4-hydroxy-3-methylbut-2-enyl diphosphate + 2 reduced [2Fe-2S]-[ferredoxin] + 2 H(+). It catalyses the reaction dimethylallyl diphosphate + 2 oxidized [2Fe-2S]-[ferredoxin] + H2O = (2E)-4-hydroxy-3-methylbut-2-enyl diphosphate + 2 reduced [2Fe-2S]-[ferredoxin] + 2 H(+). The protein operates within isoprenoid biosynthesis; dimethylallyl diphosphate biosynthesis; dimethylallyl diphosphate from (2E)-4-hydroxy-3-methylbutenyl diphosphate: step 1/1. It functions in the pathway isoprenoid biosynthesis; isopentenyl diphosphate biosynthesis via DXP pathway; isopentenyl diphosphate from 1-deoxy-D-xylulose 5-phosphate: step 6/6. Functionally, catalyzes the conversion of 1-hydroxy-2-methyl-2-(E)-butenyl 4-diphosphate (HMBPP) into a mixture of isopentenyl diphosphate (IPP) and dimethylallyl diphosphate (DMAPP). Acts in the terminal step of the DOXP/MEP pathway for isoprenoid precursor biosynthesis. The polypeptide is 4-hydroxy-3-methylbut-2-enyl diphosphate reductase (Wolbachia sp. subsp. Brugia malayi (strain TRS)).